We begin with the raw amino-acid sequence, 355 residues long: Alanine racemase (355 aa).

The active-site Proton acceptor; specific for D-alanine is Lys-34. Residue Lys-34 is modified to N6-(pyridoxal phosphate)lysine. Arg-133 provides a ligand contact to substrate. The active-site Proton acceptor; specific for L-alanine is Tyr-249. Substrate is bound at residue Met-297.

It belongs to the alanine racemase family. It depends on pyridoxal 5'-phosphate as a cofactor.

It catalyses the reaction L-alanine = D-alanine. It functions in the pathway amino-acid biosynthesis; D-alanine biosynthesis; D-alanine from L-alanine: step 1/1. Functionally, catalyzes the interconversion of L-alanine and D-alanine. May also act on other amino acids. The polypeptide is Alanine racemase (alr) (Rickettsia conorii (strain ATCC VR-613 / Malish 7)).